The sequence spans 440 residues: Tumor necrosis factor receptor superfamily member 10B (440 aa).

Disordered stretches follow at residues 1-32 (MEQR…RPGP) and 60-84 (DLAP…CPPG). An N-terminal signal peptide occupies residues 1–55 (MEQRGQNAPAASGARKRHGPGPREARGARPGPRVPKTLVLVVAAVLLLVSAESAL). Residues 56–210 (ITQQDLAPQQ…SPGTPASPCS (155 aa)) are Extracellular-facing. TNFR-Cys repeat units lie at residues 57-94 (TQQD…GRDC), 97-137 (CKYG…NTVC), and 138-178 (QCEE…DIEC). Positions 60 to 71 (DLAPQQRAAPQQ) are enriched in low complexity. Cystine bridges form between Cys-81–Cys-94, Cys-97–Cys-113, Cys-116–Cys-129, Cys-119–Cys-137, Cys-139–Cys-153, Cys-156–Cys-170, and Cys-160–Cys-178. Residues 192-206 (PAVEETVTSSPGTPA) form a TAPE repeat. Residues 211 to 231 (LSGIIIGVTVAAVVLIVAVFV) traverse the membrane as a helical segment. Topologically, residues 232-440 (CKSLLWKKVL…LEGNADSAMS (209 aa)) are cytoplasmic. Residues 339–422 (RQCFDDFADL…LAKQKIEDHL (84 aa)) enclose the Death domain.

Monomer. Can interact with TRADD and RIPK1. Interacts with HCMV protein UL141; this interaction prevents TNFRSF10B cell surface expression. Two TNFRSF10B monomers interact with a UL141 homodimer. Three TNFRSF10B molecules interact with TNFSF10 homotrimer. In the absence of stimulation, interacts with BIRC2, DDX3X and GSK3B. The interaction with BIRC2 and DDX3X is further enhanced upon receptor stimulation and accompanied by DDX3X and BIRC2 cleavage. In terms of processing, (Microbial infection) Glycosylated on Arg residue by S.typhimurium protein Ssek3. Widely expressed in adult and fetal tissues; very highly expressed in tumor cell lines such as HeLaS3, K-562, HL-60, SW480, A-549 and G-361; highly expressed in heart, peripheral blood lymphocytes, liver, pancreas, spleen, thymus, prostate, ovary, uterus, placenta, testis, esophagus, stomach and throughout the intestinal tract; not detectable in brain.

It localises to the membrane. Receptor for the cytotoxic ligand TNFSF10/TRAIL. The adapter molecule FADD recruits caspase-8 to the activated receptor. The resulting death-inducing signaling complex (DISC) performs caspase-8 proteolytic activation which initiates the subsequent cascade of caspases (aspartate-specific cysteine proteases) mediating apoptosis. Promotes the activation of NF-kappa-B. Essential for ER stress-induced apoptosis. In Homo sapiens (Human), this protein is Tumor necrosis factor receptor superfamily member 10B (TNFRSF10B).